The chain runs to 322 residues: uncharacterized protein (322 aa).

This sequence to M.jannaschii MJ0640 and MJ0799.

This is an uncharacterized protein from Synechocystis sp. (strain ATCC 27184 / PCC 6803 / Kazusa).